Consider the following 143-residue polypeptide: Large ribosomal subunit protein uL11 (143 aa).

The protein belongs to the universal ribosomal protein uL11 family. As to quaternary structure, part of the ribosomal stalk of the 50S ribosomal subunit. Interacts with L10 and the large rRNA to form the base of the stalk. L10 forms an elongated spine to which L12 dimers bind in a sequential fashion forming a multimeric L10(L12)X complex. One or more lysine residues are methylated.

In terms of biological role, forms part of the ribosomal stalk which helps the ribosome interact with GTP-bound translation factors. This Cellvibrio japonicus (strain Ueda107) (Pseudomonas fluorescens subsp. cellulosa) protein is Large ribosomal subunit protein uL11.